We begin with the raw amino-acid sequence, 1391 residues long: Enhancer of mRNA-decapping protein 4 (1391 aa).

WD repeat units follow at residues 170–210 (GITG…GKIQ), 226–274 (SIFR…TNHN), 292–331 (GHSGRLSEGALSPDGTVLATASHDGYVKFWQIYIEGQDQP), and 340–390 (HNGR…SLQT). Disordered stretches follow at residues 703–724 (QASPTRERSPDVISSASTAMPQ) and 897–924 (DWKSKLSPRSSPKLRRKSKKDEMELAKS). The segment covering 915 to 924 (KKDEMELAKS) has biased composition (basic and acidic residues). Residues 935 to 968 (ELQEELLCMLRSQQKELSDLRQNQLELMKKLTDH) are a coiled coil.

It belongs to the WD repeat EDC4 family.

It is found in the cytoplasm. Its subcellular location is the P-body. The protein localises to the nucleus. Its function is as follows. In the process of mRNA degradation, seems to play a role in mRNA decapping. The polypeptide is Enhancer of mRNA-decapping protein 4 (edc4) (Xenopus laevis (African clawed frog)).